A 690-amino-acid chain; its full sequence is DNA-directed RNA polymerase subunit beta' (690 aa).

The Zn(2+) site is built by cysteine 76, cysteine 78, cysteine 94, and cysteine 97. Positions 496, 498, and 500 each coordinate Mg(2+).

It belongs to the RNA polymerase beta' chain family. RpoC1 subfamily. As to quaternary structure, in plastids the minimal PEP RNA polymerase catalytic core is composed of four subunits: alpha, beta, beta', and beta''. When a (nuclear-encoded) sigma factor is associated with the core the holoenzyme is formed, which can initiate transcription. The cofactor is Mg(2+). Zn(2+) is required as a cofactor.

It localises to the plastid. The protein localises to the chloroplast. The catalysed reaction is RNA(n) + a ribonucleoside 5'-triphosphate = RNA(n+1) + diphosphate. Functionally, DNA-dependent RNA polymerase catalyzes the transcription of DNA into RNA using the four ribonucleoside triphosphates as substrates. The polypeptide is DNA-directed RNA polymerase subunit beta' (Lemna minor (Common duckweed)).